Consider the following 242-residue polypeptide: tRNA (guanine-N(1)-)-methyltransferase (242 aa).

Residues Gly108 and 127–132 (IGDYVL) contribute to the S-adenosyl-L-methionine site.

Belongs to the RNA methyltransferase TrmD family. In terms of assembly, homodimer.

The protein localises to the cytoplasm. The enzyme catalyses guanosine(37) in tRNA + S-adenosyl-L-methionine = N(1)-methylguanosine(37) in tRNA + S-adenosyl-L-homocysteine + H(+). In terms of biological role, specifically methylates guanosine-37 in various tRNAs. In Lactobacillus acidophilus (strain ATCC 700396 / NCK56 / N2 / NCFM), this protein is tRNA (guanine-N(1)-)-methyltransferase.